Consider the following 184-residue polypeptide: Ribosome-recycling factor (184 aa).

Belongs to the RRF family.

It is found in the cytoplasm. Responsible for the release of ribosomes from messenger RNA at the termination of protein biosynthesis. May increase the efficiency of translation by recycling ribosomes from one round of translation to another. This chain is Ribosome-recycling factor, found in Agathobacter rectalis (strain ATCC 33656 / DSM 3377 / JCM 17463 / KCTC 5835 / VPI 0990) (Eubacterium rectale).